The chain runs to 171 residues: uncharacterized protein (171 aa).

This sequence belongs to the IUNH family.

This is an uncharacterized protein from Acidianus ambivalens (Desulfurolobus ambivalens).